Here is a 750-residue protein sequence, read N- to C-terminus: Dual specificity tyrosine-phosphorylation-regulated kinase 1A (750 aa).

Disordered stretches follow at residues alanine 56 to alanine 81 and tyrosine 104 to asparagine 129. The Bipartite nuclear localization signal signature appears at arginine 109–lysine 126. In terms of domain architecture, Protein kinase spans tyrosine 151 to phenylalanine 471. Residues isoleucine 157 to valine 165, lysine 180, and phenylalanine 230 to leucine 233 contribute to the ATP site. Catalysis depends on aspartate 279, which acts as the Proton acceptor. 4 disordered regions span residues threonine 400–serine 434, glutamate 477–glycine 531, serine 583–alanine 666, and aspartate 731–serine 750. Residues glutamate 477–glutamine 493 are compositionally biased toward polar residues. A compositionally biased stretch (low complexity) spans serine 494 to glycine 517. The histidine-rich domain (HRD) stretch occupies residues glutamine 584–serine 612. The span at valine 587–glutamine 608 shows a compositional bias: basic residues. Residues isoleucine 610–asparagine 621 show a composition bias toward polar residues. Low complexity predominate over residues serine 622–threonine 659. The span at cysteine 741–serine 750 shows a compositional bias: polar residues.

The protein belongs to the protein kinase superfamily. CMGC Ser/Thr protein kinase family. MNB/DYRK subfamily. In terms of processing, autophosphorylated on tyrosine residues.

It is found in the nucleus. The protein localises to the nucleus speckle. It carries out the reaction L-seryl-[protein] + ATP = O-phospho-L-seryl-[protein] + ADP + H(+). The catalysed reaction is L-threonyl-[protein] + ATP = O-phospho-L-threonyl-[protein] + ADP + H(+). It catalyses the reaction L-tyrosyl-[protein] + ATP = O-phospho-L-tyrosyl-[protein] + ADP + H(+). The enzyme catalyses [DNA-directed RNA polymerase] + ATP = phospho-[DNA-directed RNA polymerase] + ADP + H(+). In terms of biological role, dual-specificity kinase which possesses both serine/threonine and tyrosine kinase activities. Exhibits a substrate preference for proline at position P+1 and arginine at position P-3. Plays an important role in double-strand breaks (DSBs) repair following DNA damage. Mechanistically, phosphorylates RNF169 and increases its ability to block accumulation of TP53BP1 at the DSB sites thereby promoting homologous recombination repair (HRR). Also acts as a positive regulator of transcription by acting as a CTD kinase that mediates phosphorylation of the CTD (C-terminal domain) of the large subunit of RNA polymerase II (RNAP II) POLR2A. Modulates alternative splicing by phosphorylating the splice factor SRSF6. Phosphorylates SEPTIN4, SEPTIN5 and SF3B1. The polypeptide is Dual specificity tyrosine-phosphorylation-regulated kinase 1A (Xenopus laevis (African clawed frog)).